Consider the following 346-residue polypeptide: Putative aquaporin-7B (346 aa).

Over 1–40 the chain is Cytoplasmic; that stretch reads MVQASGHRRSTRGSKMVSWSVIAKIQEIWCEEDERKMVRE. Residues 41-58 traverse the membrane as a helical segment; sequence FLAEFMSTYVMMVFGLGS. At 59 to 71 the chain is on the extracellular side; sequence VAHMVLNKTYGSY. A helical transmembrane segment spans residues 72-89; it reads LGVNLGFGFGVTMGVHVA. The Cytoplasmic segment spans residues 90 to 93; that stretch reads GRIS. The segment at residues 94–107 is an intramembrane region (discontinuously helical); that stretch reads GAHMNAAVTFTNCA. Residues 98–100 carry the NPA 1 motif; the sequence is NAA. Residues 108-115 are Cytoplasmic-facing; that stretch reads LGRVPWRK. The helical transmembrane segment at 116 to 136 threads the bilayer; that stretch reads FPVHVLGQFLGSFLAAATIYS. Topologically, residues 137–174 are extracellular; that stretch reads LFYTAILHFSGGELMVTGPFATAGIFATYLPDHMTLWR. A helical transmembrane segment spans residues 175–192; it reads GFLNEEWLTRMLQLCLFT. The Cytoplasmic segment spans residues 193 to 204; it reads ITDQENNPALPG. Residues 205-221 traverse the membrane as a helical segment; the sequence is THALVISILVVIIRVSH. Over 222-225 the chain is Extracellular; sequence GINT. An intramembrane region (discontinuously helical) is located at residues 226–239; the sequence is GYAINPSRDPPPSI. Positions 230–232 match the NPA 2 motif; that stretch reads NPS. Over 240–257 the chain is Extracellular; the sequence is FTFIAGWGKQVFSDGENW. The helical transmembrane segment at 258 to 279 threads the bilayer; the sequence is WWVPVVAPLLGASLGGIIYLVF. The Cytoplasmic segment spans residues 280 to 346; the sequence is IGSTIPREPL…LHESMALEHF (67 aa).

This sequence belongs to the MIP/aquaporin (TC 1.A.8) family. In terms of assembly, homotetramer; each monomer provides an independent glycerol/water pore.

The protein resides in the membrane. It carries out the reaction glycerol(in) = glycerol(out). The catalysed reaction is H2O(in) = H2O(out). Its function is as follows. Aquaglyceroporins form homotetrameric transmembrane channels, with each monomer independently mediating glycerol and water transport across the plasma membrane along their osmotic gradient. The polypeptide is Putative aquaporin-7B (Homo sapiens (Human)).